The primary structure comprises 127 residues: Large ribosomal subunit protein bL12 (127 aa).

The protein belongs to the bacterial ribosomal protein bL12 family. In terms of assembly, homodimer. Part of the ribosomal stalk of the 50S ribosomal subunit. Forms a multimeric L10(L12)X complex, where L10 forms an elongated spine to which 2 to 4 L12 dimers bind in a sequential fashion. Binds GTP-bound translation factors.

In terms of biological role, forms part of the ribosomal stalk which helps the ribosome interact with GTP-bound translation factors. Is thus essential for accurate translation. The protein is Large ribosomal subunit protein bL12 of Streptomyces coelicolor (strain ATCC BAA-471 / A3(2) / M145).